Consider the following 332-residue polypeptide: Delta-aminolevulinic acid dehydratase (332 aa).

Lys202 functions as the Schiff-base intermediate with substrate in the catalytic mechanism. Positions 212 and 225 each coordinate 5-aminolevulinate. Catalysis depends on Lys256, which acts as the Schiff-base intermediate with substrate. 5-aminolevulinate-binding residues include Ser282 and Tyr321.

The protein belongs to the ALAD family. Homohexamer.

It catalyses the reaction 2 5-aminolevulinate = porphobilinogen + 2 H2O + H(+). It functions in the pathway porphyrin-containing compound metabolism; protoporphyrin-IX biosynthesis; coproporphyrinogen-III from 5-aminolevulinate: step 1/4. Functionally, catalyzes an early step in the biosynthesis of tetrapyrroles. Binds two molecules of 5-aminolevulinate per subunit, each at a distinct site, and catalyzes their condensation to form porphobilinogen. This Rhodobacter capsulatus (Rhodopseudomonas capsulata) protein is Delta-aminolevulinic acid dehydratase (hemB).